Consider the following 456-residue polypeptide: Perilipin-5 (456 aa).

Residues 1-20 (MSEDEAAQAPGPSLSEQDQQ) form a disordered region. The tract at residues 1–108 (MSEDEAAQAP…KLEEKLPFLQ (108 aa)) is interaction with LIPE. Residues 1–173 (MSEDEAAQAP…HFLPMTEEEL (173 aa)) form an essential for lipid droplet targeting region. S2, S148, and S324 each carry phosphoserine. Residues 185–456 (VGSVEEQRKH…KHTLMPELDF (272 aa)) are interaction with PNPLA2 and ABHD5. A disordered region spans residues 420-456 (AWQAQHGEGTVLSGNIPEEEPEPPSRPKHTLMPELDF). A recruits mitochondria at the lipid droplet surface region spans residues 438–456 (EEPEPPSRPKHTLMPELDF).

The protein belongs to the perilipin family. As to quaternary structure, homooligomer. Interacts with PNPLA2; prevents interaction of PNPLA2 with ABHD5. Interacts with ABHD5; targets ABHD5 to lipid droplets and promotes interaction of ABHD5 with PNPLA2. Interacts with LIPE. In terms of processing, phosphorylated by PKA. Phosphorylated on serine in skeletal muscle at rest or upon lipolytic stimulation.

It is found in the lipid droplet. The protein resides in the cytoplasm. The protein localises to the mitochondrion. Lipid droplet-associated protein that maintains the balance between lipogenesis and lipolysis and also regulates fatty acid oxidation in oxidative tissues. Recruits mitochondria to the surface of lipid droplets and is involved in lipid droplet homeostasis by regulating both the storage of fatty acids in the form of triglycerides and the release of fatty acids for mitochondrial fatty acid oxidation. In lipid droplet triacylglycerol hydrolysis, plays a role as a scaffolding protein for three major key lipolytic players: ABHD5, PNPLA2 and LIPE. Reduces the triacylglycerol hydrolase activity of PNPLA2 by recruiting and sequestering PNPLA2 to lipid droplets. Phosphorylation by PKA enables lipolysis probably by promoting release of ABHD5 from the perilipin scaffold and by facilitating interaction of ABHD5 with PNPLA2. Also increases lipolysis through interaction with LIPE and upon PKA-mediated phosphorylation of LIPE. In Ovis aries (Sheep), this protein is Perilipin-5 (Plin5).